Here is a 496-residue protein sequence, read N- to C-terminus: Rhamnulokinase (496 aa).

13-17 serves as a coordination point for ATP; the sequence is ASSGR. Substrate is bound by residues Gly-83 and 236–238; that span reads HDT. Asp-237 functions as the Proton acceptor in the catalytic mechanism. An ATP-binding site is contributed by Thr-259. Asn-296 is a substrate binding site. Gln-304 serves as a coordination point for ATP. Cysteines 353 and 370 form a disulfide. Gly-402 contacts ATP. An intrachain disulfide couples Cys-413 to Cys-417.

Belongs to the rhamnulokinase family. The cofactor is Mg(2+).

It catalyses the reaction L-rhamnulose + ATP = L-rhamnulose 1-phosphate + ADP + H(+). It participates in carbohydrate degradation; L-rhamnose degradation; glycerone phosphate from L-rhamnose: step 2/3. Functionally, involved in the catabolism of L-rhamnose (6-deoxy-L-mannose). Catalyzes the transfer of the gamma-phosphate group from ATP to the 1-hydroxyl group of L-rhamnulose to yield L-rhamnulose 1-phosphate. The polypeptide is Rhamnulokinase (Pectobacterium carotovorum subsp. carotovorum (strain PC1)).